Reading from the N-terminus, the 928-residue chain is 2-oxoglutarate dehydrogenase E1 component (928 aa).

This sequence belongs to the alpha-ketoglutarate dehydrogenase family. In terms of assembly, homodimer. Part of the 2-oxoglutarate dehydrogenase (OGDH) complex composed of E1 (2-oxoglutarate dehydrogenase), E2 (dihydrolipoamide succinyltransferase) and E3 (dihydrolipoamide dehydrogenase); the complex contains multiple copies of the three enzymatic components (E1, E2 and E3). It depends on thiamine diphosphate as a cofactor.

The catalysed reaction is N(6)-[(R)-lipoyl]-L-lysyl-[protein] + 2-oxoglutarate + H(+) = N(6)-[(R)-S(8)-succinyldihydrolipoyl]-L-lysyl-[protein] + CO2. Functionally, E1 component of the 2-oxoglutarate dehydrogenase (OGDH) complex which catalyzes the decarboxylation of 2-oxoglutarate, the first step in the conversion of 2-oxoglutarate to succinyl-CoA and CO(2). This Rickettsia conorii (strain ATCC VR-613 / Malish 7) protein is 2-oxoglutarate dehydrogenase E1 component (sucA).